The primary structure comprises 1155 residues: PAN2-PAN3 deadenylation complex catalytic subunit pan2 (1155 aa).

WD repeat units lie at residues 102-145 (THED…DKLP) and 276-315 (ANVS…HFNE). The interval 316–452 (MSKEVEFADV…GTKLNGEAED (137 aa)) is linker. The USP domain occupies 453–822 (DPLLKYSNVE…VPCVLAYQVK (370 aa)). Positions 871 to 1049 (VALDTEFVDL…IEDARMALRL (179 aa)) constitute an Exonuclease domain. The a divalent metal cation site is built by Asp874, Glu876, Asp983, and Asp1042. Residues 1095–1155 (TAVTMQNNSG…GDFFGGSPLK (61 aa)) form a disordered region. Polar residues predominate over residues 1097 to 1106 (VTMQNNSGRN). The span at 1107–1124 (TPSTPEVTAPTASAPTTP) shows a compositional bias: low complexity.

This sequence belongs to the peptidase C19 family. PAN2 subfamily. In terms of assembly, forms a heterotrimer with an asymmetric homodimer of the regulatory subunit pan3 to form the poly(A)-nuclease (PAN) deadenylation complex. Requires a divalent metal cation as cofactor.

It is found in the cytoplasm. The catalysed reaction is Exonucleolytic cleavage of poly(A) to 5'-AMP.. Its activity is regulated as follows. Positively regulated by the regulatory subunit pan3. In terms of biological role, catalytic subunit of the poly(A)-nuclease (PAN) deadenylation complex, one of two cytoplasmic mRNA deadenylases involved in mRNA turnover. PAN specifically shortens poly(A) tails of RNA and the activity is stimulated by poly(A)-binding protein pab1. PAN deadenylation is followed by rapid degradation of the shortened mRNA tails by the CCR4-NOT complex. Deadenylated mRNAs are then degraded by two alternative mechanisms, namely exosome-mediated 3'-5' exonucleolytic degradation, or deadenylation-dependent mRNA decaping and subsequent 5'-3' exonucleolytic degradation by xrn1. May also be involved in post-transcriptional maturation of mRNA poly(A) tails. The polypeptide is PAN2-PAN3 deadenylation complex catalytic subunit pan2 (Aspergillus oryzae (strain ATCC 42149 / RIB 40) (Yellow koji mold)).